The chain runs to 64 residues: Toxin BmKIT3 (64 aa).

The LCN-type CS-alpha/beta domain occupies 1 to 61 (DGYIRGSNGC…TWKSESNTCG (61 aa)). 4 cysteine pairs are disulfide-bonded: Cys-10-Cys-60, Cys-14-Cys-35, Cys-21-Cys-42, and Cys-25-Cys-44. Cys-60 is modified (cysteine amide).

Belongs to the long (4 C-C) scorpion toxin superfamily. Sodium channel inhibitor family. Beta subfamily. Expressed by the venom gland.

It localises to the secreted. Its function is as follows. Depressant insect beta-toxins cause a transient contraction paralysis followed by a slow flaccid paralysis. They bind voltage-independently at site-4 of sodium channels (Nav) and shift the voltage of activation toward more negative potentials thereby affecting sodium channel activation and promoting spontaneous and repetitive firing. The protein is Toxin BmKIT3 of Olivierus martensii (Manchurian scorpion).